The chain runs to 345 residues: Fe-S cluster assembly protein DRE2 (345 aa).

The N-terminal SAM-like domain stretch occupies residues 29–163 (GDSGDRTLLL…KPDYAEQEVV (135 aa)). The linker stretch occupies residues 164–237 (PLRFGAKKVN…EDTLLTEADL (74 aa)). Cys-247, Cys-258, Cys-261, and Cys-263 together coordinate [2Fe-2S] cluster. The fe-S binding site A stretch occupies residues 247–263 (CAPQPGKKRRACKDCTC). Residues Cys-308, Cys-311, Cys-319, and Cys-322 each coordinate [4Fe-4S] cluster. Short sequence motifs (cx2C motif) lie at residues 308–311 (CNSC) and 319–322 (CADC). The fe-S binding site B stretch occupies residues 308–322 (CNSCYLGDAFRCADC).

Belongs to the anamorsin family. Monomer. Interacts with TAH18. Interacts with MIA40. [2Fe-2S] cluster serves as cofactor. It depends on [4Fe-4S] cluster as a cofactor.

It is found in the cytoplasm. Its subcellular location is the mitochondrion intermembrane space. In terms of biological role, component of the cytosolic iron-sulfur (Fe-S) protein assembly (CIA) machinery required for the maturation of extramitochondrial Fe-S proteins. Part of an electron transfer chain functioning in an early step of cytosolic Fe-S biogenesis, facilitating the de novo assembly of a [4Fe-4S] cluster on the scaffold complex CFD1-NBP35. Electrons are transferred to DRE2 from NADPH via the FAD- and FMN-containing protein TAH18. TAH18-DRE2 are also required for the assembly of the diferric tyrosyl radical cofactor of ribonucleotide reductase (RNR), probably by providing electrons for reduction during radical cofactor maturation in the catalytic small subunit RNR2. The sequence is that of Fe-S cluster assembly protein DRE2 from Podospora anserina (strain S / ATCC MYA-4624 / DSM 980 / FGSC 10383) (Pleurage anserina).